The chain runs to 515 residues: 2-isopropylmalate synthase (515 aa).

The region spanning 5-267 is the Pyruvate carboxyltransferase domain; sequence VIIFDTTLRD…HTGLDHKEIH (263 aa). Aspartate 14, histidine 202, histidine 204, and asparagine 238 together coordinate Mn(2+). The tract at residues 392–515 is regulatory domain; that stretch reads KLNYLSVQSG…EMKQQKFATV (124 aa).

Belongs to the alpha-IPM synthase/homocitrate synthase family. LeuA type 1 subfamily. In terms of assembly, homodimer. Mn(2+) is required as a cofactor.

It is found in the cytoplasm. It catalyses the reaction 3-methyl-2-oxobutanoate + acetyl-CoA + H2O = (2S)-2-isopropylmalate + CoA + H(+). The protein operates within amino-acid biosynthesis; L-leucine biosynthesis; L-leucine from 3-methyl-2-oxobutanoate: step 1/4. Catalyzes the condensation of the acetyl group of acetyl-CoA with 3-methyl-2-oxobutanoate (2-ketoisovalerate) to form 3-carboxy-3-hydroxy-4-methylpentanoate (2-isopropylmalate). The chain is 2-isopropylmalate synthase from Vibrio atlanticus (strain LGP32) (Vibrio splendidus (strain Mel32)).